The following is a 266-amino-acid chain: MTDAATGTTRADTFEDPLVIAGEKFHSRLIMGTGGAPSLHVLADALRASGTEMTTVAMRRVDPNAQGSVWDVLRETGVRPLPNTAGCFTAVDALRTARLGREALETNWVKLEVVADERTLLPDPVETLDAAERLVDEGFVVLAYTNDDPVLARRLAQVGCAAVMPLGAPIGSGMGIRNPHNIELIVEELDVPVILDAGIGTASDAALAMELGCDAVLLATAVTRAQDPVLMAHAMREAVSAGRRARLAGRIPIRRYAHASSPPREG.

Lys-110 (schiff-base intermediate with DXP) is an active-site residue. 1-deoxy-D-xylulose 5-phosphate-binding positions include Gly-171, Ala-197 to Gly-198, and Ala-219 to Thr-220.

Belongs to the ThiG family. Homotetramer. Forms heterodimers with either ThiH or ThiS.

The protein resides in the cytoplasm. The catalysed reaction is [ThiS sulfur-carrier protein]-C-terminal-Gly-aminoethanethioate + 2-iminoacetate + 1-deoxy-D-xylulose 5-phosphate = [ThiS sulfur-carrier protein]-C-terminal Gly-Gly + 2-[(2R,5Z)-2-carboxy-4-methylthiazol-5(2H)-ylidene]ethyl phosphate + 2 H2O + H(+). Its pathway is cofactor biosynthesis; thiamine diphosphate biosynthesis. Functionally, catalyzes the rearrangement of 1-deoxy-D-xylulose 5-phosphate (DXP) to produce the thiazole phosphate moiety of thiamine. Sulfur is provided by the thiocarboxylate moiety of the carrier protein ThiS. In vitro, sulfur can be provided by H(2)S. This Thermobifida fusca (strain YX) protein is Thiazole synthase.